A 299-amino-acid polypeptide reads, in one-letter code: Probable arylamine N-acetyltransferase 2 (299 aa).

Residue cysteine 75 is the Acyl-thioester intermediate of the active site. Catalysis depends on residues histidine 115 and aspartate 130.

It belongs to the arylamine N-acetyltransferase family.

It catalyses the reaction an arylamine + acetyl-CoA = an N-acetylarylamine + CoA. This is Probable arylamine N-acetyltransferase 2 from Dictyostelium discoideum (Social amoeba).